The chain runs to 409 residues: uncharacterized protein (409 aa).

Helical transmembrane passes span 22-42 (ILII…VIPA), 58-78 (LGII…VVGW), 99-119 (GILG…VFFI), 174-194 (FGAV…MYIA), 217-237 (NTAI…LIFA), 266-286 (SYIF…GPLA), 293-312 (FVIL…LPFA), 316-338 (LAYG…TVVY), 353-373 (LTVG…GALI), and 378-398 (LTPT…AFLL).

This sequence belongs to the major facilitator superfamily.

It is found in the cell membrane. This is an uncharacterized protein from Bacillus subtilis (strain 168).